A 393-amino-acid chain; its full sequence is Elongation factor Tu (393 aa).

Residues Lys10 to Val203 form the tr-type G domain. Residues Gly19–Thr26 are G1. Gly19–Thr26 lines the GTP pocket. A Mg(2+)-binding site is contributed by Thr26. The G2 stretch occupies residues Gly60–Ser64. Residues Asp81–Gly84 are G3. Residues Asp81–His85 and Asn136–Asp139 contribute to the GTP site. The segment at Asn136–Asp139 is G4. The interval Ser173–Leu175 is G5.

Belongs to the TRAFAC class translation factor GTPase superfamily. Classic translation factor GTPase family. EF-Tu/EF-1A subfamily. Monomer.

It is found in the cytoplasm. The catalysed reaction is GTP + H2O = GDP + phosphate + H(+). Its function is as follows. GTP hydrolase that promotes the GTP-dependent binding of aminoacyl-tRNA to the A-site of ribosomes during protein biosynthesis. In Chlorobium limicola (strain DSM 245 / NBRC 103803 / 6330), this protein is Elongation factor Tu.